The following is a 294-amino-acid chain: Cyclin-dependent kinase A-1 (294 aa).

Residues 4-287 (YEKEEKIGEG…ARQALEHEYF (284 aa)) form the Protein kinase domain. ATP contacts are provided by residues 10–18 (IGEGTYGVV) and K33. T14 is subject to Phosphothreonine. Y15 carries the phosphotyrosine modification. D127 acts as the Proton acceptor in catalysis. At T161 the chain carries Phosphothreonine; by CAK.

Belongs to the protein kinase superfamily. CMGC Ser/Thr protein kinase family. CDC2/CDKX subfamily. In terms of processing, phosphorylated at Thr-161 by CDKD-1. In terms of tissue distribution, expressed in the dividing region of the root apex and in differentiated cells such as those in the sclerenchyma, pericycle and parenchyma of the central cylinder.

It carries out the reaction L-seryl-[protein] + ATP = O-phospho-L-seryl-[protein] + ADP + H(+). It catalyses the reaction L-threonyl-[protein] + ATP = O-phospho-L-threonyl-[protein] + ADP + H(+). The catalysed reaction is [DNA-directed RNA polymerase] + ATP = phospho-[DNA-directed RNA polymerase] + ADP + H(+). In Oryza sativa subsp. japonica (Rice), this protein is Cyclin-dependent kinase A-1 (CDKA-1).